A 222-amino-acid chain; its full sequence is Urease accessory protein UreF (222 aa).

It belongs to the UreF family. UreD, UreF and UreG form a complex that acts as a GTP-hydrolysis-dependent molecular chaperone, activating the urease apoprotein by helping to assemble the nickel containing metallocenter of UreC. The UreE protein probably delivers the nickel.

It is found in the cytoplasm. Functionally, required for maturation of urease via the functional incorporation of the urease nickel metallocenter. This chain is Urease accessory protein UreF, found in Roseobacter denitrificans (strain ATCC 33942 / OCh 114) (Erythrobacter sp. (strain OCh 114)).